The following is a 344-amino-acid chain: DNA-directed RNA polymerase subunit alpha (344 aa).

The tract at residues 1–232 (MGQYTINLRE…HLFLPPFGLE (232 aa)) is alpha N-terminal domain (alpha-NTD). The interval 270-344 (LIKDQFLEYS…KRFGINLKLK (75 aa)) is alpha C-terminal domain (alpha-CTD).

The protein belongs to the RNA polymerase alpha chain family. In plastids the minimal PEP RNA polymerase catalytic core is composed of four subunits: alpha, beta, beta', and beta''. When a (nuclear-encoded) sigma factor is associated with the core the holoenzyme is formed, which can initiate transcription.

It is found in the plastid. It localises to the chloroplast. It carries out the reaction RNA(n) + a ribonucleoside 5'-triphosphate = RNA(n+1) + diphosphate. DNA-dependent RNA polymerase catalyzes the transcription of DNA into RNA using the four ribonucleoside triphosphates as substrates. This chain is DNA-directed RNA polymerase subunit alpha, found in Spirogyra maxima (Green alga).